Here is a 119-residue protein sequence, read N- to C-terminus: MQAKAILRHTPTSPRKMRLVAGLVRGKAVDQAKAILLNSTKAASRNALQTLKSAVANYAQLNPDERVGDQELFVKSVFVDEGATLKRMLPAPMGRAYRVRKRSNHLTIIVDKVKNPETK.

It belongs to the universal ribosomal protein uL22 family. Part of the 50S ribosomal subunit.

Functionally, this protein binds specifically to 23S rRNA; its binding is stimulated by other ribosomal proteins, e.g. L4, L17, and L20. It is important during the early stages of 50S assembly. It makes multiple contacts with different domains of the 23S rRNA in the assembled 50S subunit and ribosome. The globular domain of the protein is located near the polypeptide exit tunnel on the outside of the subunit, while an extended beta-hairpin is found that lines the wall of the exit tunnel in the center of the 70S ribosome. The protein is Large ribosomal subunit protein uL22 of Chlorobium luteolum (strain DSM 273 / BCRC 81028 / 2530) (Pelodictyon luteolum).